Here is a 246-residue protein sequence, read N- to C-terminus: Transcription factor MYB13 (246 aa).

HTH myb-type domains follow at residues 9–61 (KIGL…INYL) and 62–116 (RPDI…KKRL). DNA-binding regions (H-T-H motif) lie at residues 37 to 61 (WRAL…INYL) and 89 to 112 (WSAI…HTHL).

In terms of tissue distribution, expressed in roots and flowers. Expressed in shoot apex, axillary buds, at the basis of flowers and branching points of inflorescences.

The protein resides in the nucleus. Its function is as follows. Plays a regulatory role in meristem function. Functions as component of a regulatory network controlling the establishment and/or development of the shoot system by the regulation of apical meristem function. May play a role in tolerance to boric acid. The polypeptide is Transcription factor MYB13 (Arabidopsis thaliana (Mouse-ear cress)).